Reading from the N-terminus, the 132-residue chain is S-protein homolog 8 (132 aa).

Residues 1-20 (MHSLSWFLLVIGLSVGLSSG) form the signal peptide.

Belongs to the plant self-incompatibility (S1) protein family. In terms of tissue distribution, mostly expressed in seedlings, stems, leaves and floral tissues, and, to a lower extent, in roots.

It is found in the secreted. The sequence is that of S-protein homolog 8 from Arabidopsis thaliana (Mouse-ear cress).